A 456-amino-acid polypeptide reads, in one-letter code: Bifunctional protein GlmU (456 aa).

Positions methionine 1–lysine 228 are pyrophosphorylase. UDP-N-acetyl-alpha-D-glucosamine contacts are provided by residues leucine 11–glycine 14, lysine 25, glutamine 75, glycine 80–threonine 81, tyrosine 102–aspartate 104, glycine 138, glutamate 153, asparagine 168, and asparagine 226. Aspartate 104 lines the Mg(2+) pocket. Asparagine 226 provides a ligand contact to Mg(2+). Residues leucine 229–alanine 249 are linker. The tract at residues glycine 250–glutamine 456 is N-acetyltransferase. Arginine 332 and lysine 350 together coordinate UDP-N-acetyl-alpha-D-glucosamine. The active-site Proton acceptor is histidine 362. The UDP-N-acetyl-alpha-D-glucosamine site is built by tyrosine 365 and asparagine 376. Acetyl-CoA contacts are provided by residues alanine 379, asparagine 385–tyrosine 386, serine 404, alanine 422, and arginine 439.

The protein in the N-terminal section; belongs to the N-acetylglucosamine-1-phosphate uridyltransferase family. This sequence in the C-terminal section; belongs to the transferase hexapeptide repeat family. In terms of assembly, homotrimer. Mg(2+) serves as cofactor.

It is found in the cytoplasm. The enzyme catalyses alpha-D-glucosamine 1-phosphate + acetyl-CoA = N-acetyl-alpha-D-glucosamine 1-phosphate + CoA + H(+). It catalyses the reaction N-acetyl-alpha-D-glucosamine 1-phosphate + UTP + H(+) = UDP-N-acetyl-alpha-D-glucosamine + diphosphate. It participates in nucleotide-sugar biosynthesis; UDP-N-acetyl-alpha-D-glucosamine biosynthesis; N-acetyl-alpha-D-glucosamine 1-phosphate from alpha-D-glucosamine 6-phosphate (route II): step 2/2. It functions in the pathway nucleotide-sugar biosynthesis; UDP-N-acetyl-alpha-D-glucosamine biosynthesis; UDP-N-acetyl-alpha-D-glucosamine from N-acetyl-alpha-D-glucosamine 1-phosphate: step 1/1. Its pathway is bacterial outer membrane biogenesis; LPS lipid A biosynthesis. Catalyzes the last two sequential reactions in the de novo biosynthetic pathway for UDP-N-acetylglucosamine (UDP-GlcNAc). The C-terminal domain catalyzes the transfer of acetyl group from acetyl coenzyme A to glucosamine-1-phosphate (GlcN-1-P) to produce N-acetylglucosamine-1-phosphate (GlcNAc-1-P), which is converted into UDP-GlcNAc by the transfer of uridine 5-monophosphate (from uridine 5-triphosphate), a reaction catalyzed by the N-terminal domain. The protein is Bifunctional protein GlmU of Neisseria meningitidis serogroup A / serotype 4A (strain DSM 15465 / Z2491).